The primary structure comprises 1321 residues: MSDSVILRSVKKFGEENHGFESDGSYNNEKKSRLQDKKKSDSVRIGFFQLFRFSSWTDIWLMCMGSLCACIHGIAQPGVLLIFGTMTDVFIDYDTELQELKIPGKACVNNTIVWINSSLNQNVTNGTRCGLLDIESEMIRFAGYYAGIGIAVLTTGYIQICFWGIAAAHQIQKMRKSYFRKIMRMGIGWVDCNSVGKLNTPFSVDFNKINDSSADQLAIFIQGMTSPIFGFLVGFSQWWKLTLVIISVSPLIGLGAAIIGLSVSKFTDYELKAYAKAGSVADEVISSMRTVAAFGGEKKEVERYEKNLVFAQRWGIRKGIVMGFFTGYMWCLIFFCYALAFWYGSKLVLEEGEYSPGALVQIFLSVIIGALNLGNASPCLEAFAAGRAAASSIFETIDRKPIIDCMSEDGYKLERIKGEIEFHNVTFHYPSRPEVKILNNLSMVIKPGEMTALVGPSGAGKSTALQLIHRFYGPTEGMVTVESHDIRSSHIQWLRNQIGIVEQEPVLFFHTIAEKIRYGREDATMEDLIQAAKEANAYNFIMDLPQQFDTLVGEGGGQMSGGQKQRVAIARALIRNPKILLLDMATSALDNESEAMVQEALSKTQHGHTIVSVAHRPATIRTADVIIGCEHGAAVERGTEEELLERKGVYFALVTLQSQRNQGDQEENEKDATEDDIPEKTFSRGNYQDSLRASLRQRSKSQLSYLAHEPPMAVEDHKSTHEEDRKDKDLPAQEDIEPASVRRIMKLNAPEWPYMLLGSMGAAVNGAVTPLYAFLFSQILGTFSLPDKEEQRSQINGICLLFVTLGCVSFFTQFLQGYTFAKSGELLTKRLRKFGFRAMLGQDIGWFDDLRNSPGALTTRLATDASQVQGATGSQIGMMVNSFTNVTVAMIIAFLFSWKLTLGIVCFFPFLALSGALQTKMLTGFASRDKQALEKAGQITSEALSNIRTVAGIGKERKFIETFEAELEKPYKMAIKKANVYGLCFGFSQCITFIANSASYRYGGYLISNEGLHFSYVFRVISAVVLSATALGRASSYTPSYAKAKISAARFFQLLDRQPPINVYSSAGEKWDNFQGKIDFVDCKFTYPSRPDIQVLNGLSVSMSPRQTLAFVGSSGCGKSTSIQLLERFYDPDHGKVMIDGHDSRKVNIQFLRSNIGIVSQEPVLFACSIKDNIKYGDNTQEIPMERIIAAAKKAQVHDFVMSLPEKYETNVGSQGSQLSRGEKQRIAIARAIVRDPKILLLDEATSALDTESEKTVQVALDKAREGRTCIVIAHRLSTIQNSDIIAVMSQGMVIEKGTHEELMVQKGAYYKLVTTGSPIS.

The Cytoplasmic portion of the chain corresponds to M1 to M62. Positions M62–A385 constitute an ABC transmembrane type-1 1 domain. A helical transmembrane segment spans residues C63–F83. Topologically, residues G84–G147 are extracellular. 4 N-linked (GlcNAc...) asparagine glycosylation sites follow: N109, N116, N122, and N125. Residues I148–A168 form a helical membrane-spanning segment. Residues H169 to D215 are Cytoplasmic-facing. The helical transmembrane segment at Q216–S236 threads the bilayer. Over Q237 to K240 the chain is Extracellular. Residues L241–L261 traverse the membrane as a helical segment. Residues S262–G319 are Cytoplasmic-facing. Residues I320 to A340 traverse the membrane as a helical segment. The Extracellular portion of the chain corresponds to F341–E353. The chain crosses the membrane as a helical span at residues Y354–G374. Topologically, residues N375–M755 are cytoplasmic. Residues I420–L656 enclose the ABC transporter 1 domain. G455–S462 is an ATP binding site. T586 bears the Phosphothreonine mark. S587 carries the post-translational modification Phosphoserine. The segment at F651–A672 is interaction with HAX1. Positions Q659–D735 are disordered. Residues D664–I677 are compositionally biased toward acidic residues. Phosphoserine occurs at positions 690, 701, and 704. Residues V714 to P731 are compositionally biased toward basic and acidic residues. Positions M755–K1043 constitute an ABC transmembrane type-1 2 domain. The helical transmembrane segment at L756–F776 threads the bilayer. Over S777–Q794 the chain is Extracellular. A helical transmembrane segment spans residues I795–L815. The Cytoplasmic segment spans residues Q816–Q869. 2 helical membrane passes run G870–M890 and I891–L911. At A912–N979 the chain is on the cytoplasmic side. Residues V980–Y1000 traverse the membrane as a helical segment. The Extracellular segment spans residues R1001–G1011. A helical membrane pass occupies residues L1012–G1032. Residues R1033–S1321 lie on the Cytoplasmic side of the membrane. An ABC transporter 2 domain is found at I1078–T1316. G1113–S1120 serves as a coordination point for ATP. Phosphoserine occurs at positions 1214 and 1321.

Belongs to the ABC transporter superfamily. ABCB family. Multidrug resistance exporter (TC 3.A.1.201) subfamily. In terms of assembly, interacts with HAX1. Interacts with the adapter protein complex 2 (AP-2) throught AP2A2 or AP2A1; this interaction regulates cell membrane expression of ABCB11 through its internalization in a clathrin-dependent manner and its subsequent degradation. In terms of processing, N-glycosylated. Post-translationally, ubiquitinated; short-chain ubiquitination regulates cell-Surface expression of ABCB11. In terms of tissue distribution, expressed predominantly, if not exclusively in the liver, where it was further localized to the canalicular microvilli and to subcanalicular vesicles of the hepatocytes by in situ.

The protein resides in the apical cell membrane. It is found in the recycling endosome membrane. It localises to the endosome. The protein localises to the cell membrane. The catalysed reaction is cholate(in) + ATP + H2O = cholate(out) + ADP + phosphate + H(+). The enzyme catalyses taurocholate(in) + ATP + H2O = taurocholate(out) + ADP + phosphate + H(+). It carries out the reaction glycocholate(in) + ATP + H2O = glycocholate(out) + ADP + phosphate + H(+). It catalyses the reaction glycochenodeoxycholate(in) + ATP + H2O = glycochenodeoxycholate(out) + ADP + phosphate + H(+). The catalysed reaction is taurochenodeoxycholate(in) + ATP + H2O = taurochenodeoxycholate(out) + ADP + phosphate + H(+). The enzyme catalyses glycoursodeoxycholate(in) + ATP + H2O = glycoursodeoxycholate(out) + ADP + phosphate + H(+). It carries out the reaction tauroursodeoxycholate(in) + ATP + H2O = tauroursodeoxycholate(out) + ADP + phosphate + H(+). It catalyses the reaction taurodeoxycholate(in) + ATP + H2O = taurodeoxycholate(out) + ADP + phosphate + H(+). The catalysed reaction is taurolithocholate 3-sulfate(in) + ATP + H2O = taurolithocholate 3-sulfate(out) + ADP + phosphate + H(+). The enzyme catalyses pravastatin(in) + ATP + H2O = pravastatin(out) + ADP + phosphate + H(+). Its activity is regulated as follows. The uptake of taurocholate is inhibited by taurolithocholate sulfate with an IC(50) of 9 uM. Pravastatin competitively inhibits the transport of taurocholic acid. Cyclosporin A, glibenclamide, rifampicin and troglitazonestrongly competitively inhibit the transport activity of taurocholate. The canalicular transport activity of taurocholate is strongly dependent on canalicular membrane cholesterol content. The uptake of taurocholate is increased by short- and medium-chain fatty acids. Cholesterol increases transport capacity of taurocholate without affecting the affinity for the substrate. Functionally, catalyzes the transport of the major hydrophobic bile salts, such as taurine and glycine-conjugated cholic acid across the canalicular membrane of hepatocytes in an ATP-dependent manner, therefore participates in hepatic bile acid homeostasis and consequently to lipid homeostasis through regulation of biliary lipid secretion in a bile salts dependent manner. Transports taurine-conjugated bile salts more rapidly than glycine-conjugated bile salts. Also transports non-bile acid compounds, such as pravastatin and fexofenadine in an ATP-dependent manner and may be involved in their biliary excretion. The sequence is that of Bile salt export pump from Oryctolagus cuniculus (Rabbit).